A 351-amino-acid chain; its full sequence is tRNA-specific 2-thiouridylase MnmA (351 aa).

Residue 6-13 participates in ATP binding; sequence ALSGGTDS. Cysteine 96 (nucleophile) is an active-site residue. A disulfide bridge links cysteine 96 with cysteine 193. Glycine 120 lines the ATP pocket. The segment at 143–145 is interaction with tRNA; that stretch reads KDQ. The active-site Cysteine persulfide intermediate is the cysteine 193. The interaction with tRNA stretch occupies residues 298 to 299; sequence RY.

It belongs to the MnmA/TRMU family.

Its subcellular location is the cytoplasm. The enzyme catalyses S-sulfanyl-L-cysteinyl-[protein] + uridine(34) in tRNA + AH2 + ATP = 2-thiouridine(34) in tRNA + L-cysteinyl-[protein] + A + AMP + diphosphate + H(+). Catalyzes the 2-thiolation of uridine at the wobble position (U34) of tRNA, leading to the formation of s(2)U34. The chain is tRNA-specific 2-thiouridylase MnmA from Nitratidesulfovibrio vulgaris (strain DSM 19637 / Miyazaki F) (Desulfovibrio vulgaris).